Here is a 196-residue protein sequence, read N- to C-terminus: Late protein I196L (196 aa).

2 tandem repeats follow at residues 28–48 and 49–70. One copy of the 3; approximate repeat lies at 71-92; it reads SNYLTSAIPNIISDKEDDTPFS.

Belongs to the asfivirus I196L family.

The protein is Late protein I196L of African swine fever virus (strain Badajoz 1971 Vero-adapted) (Ba71V).